Reading from the N-terminus, the 122-residue chain is Small ribosomal subunit protein bS16 (122 aa).

The segment at 87–122 (AQSNPKKALPKKKAQERAAASAAAAEKAAAAAAPEA) is disordered. A compositionally biased stretch (low complexity) spans 103–122 (RAAASAAAAEKAAAAAAPEA).

It belongs to the bacterial ribosomal protein bS16 family.

This is Small ribosomal subunit protein bS16 from Methylocella silvestris (strain DSM 15510 / CIP 108128 / LMG 27833 / NCIMB 13906 / BL2).